The primary structure comprises 525 residues: MNNIHDHKILILDFGSQYTQLIARRIREIGVYCELWAWDVSEEQIKEFAPNGIILAGGPESVTAKDSPRAPEYVFTAGVPVLGICYGMQTMSEQLGGKVIQGVGEGEFGYAQVELQTQSELFKSIEDAISDSGKPLLDVWMSHGDKVSEIPEGFVTVANTETCPYAAMANEEKKFYGVQFHPEVTHTRQGKRMLEHFALDICQCDANWKPASIIEDAIERLKQQIGDDEVILGLSGGVDSSVVAMLLHRAIGDKLTCVFVDNGLLRLNEAQQVMDMFGDHFGLNIVHVDAENRFLDAMAGEADPEAKRKIIGHVFVDIFDEESKKCVNAKWLAQGTIYPDVIESAGSATGKAHVIKSHHNVGGLPDDMEMGLVEPLRELFKDEVRKIGLELGLPYDMLYRHPFPGPGLGVRVLGEVKKEYCDLLRLADAIFIEELHKADLYNKVSQAFTVFLPVRSVGVMGDGRKYDWVVSLRAVETIDFMTAHWAHLPYDFLGRVSNRIINEIDGISRVVYDISGKPPATIEWE.

The Glutamine amidotransferase type-1 domain maps to 8-207 (KILILDFGSQ…ALDICQCDAN (200 aa)). Catalysis depends on Cys-85, which acts as the Nucleophile. Active-site residues include His-181 and Glu-183. The GMPS ATP-PPase domain occupies 208–400 (WKPASIIEDA…LGLPYDMLYR (193 aa)). 235–241 (SGGVDSS) is an ATP binding site.

As to quaternary structure, homodimer.

The catalysed reaction is XMP + L-glutamine + ATP + H2O = GMP + L-glutamate + AMP + diphosphate + 2 H(+). The protein operates within purine metabolism; GMP biosynthesis; GMP from XMP (L-Gln route): step 1/1. Functionally, catalyzes the synthesis of GMP from XMP. This Shewanella woodyi (strain ATCC 51908 / MS32) protein is GMP synthase [glutamine-hydrolyzing].